We begin with the raw amino-acid sequence, 447 residues long: Coagulation factor VII (447 aa).

The first 23 residues, Met-1–Ala-23, serve as a signal peptide directing secretion. Positions Val-24–Arg-40 are excised as a propeptide. The Gla domain occupies Ala-41–Asn-85. Glu-46, Glu-47, Glu-54, Glu-56, Glu-59, Glu-60, Glu-65, Glu-66, Glu-69, Glu-74, and Glu-75 each carry 4-carboxyglutamate. Cys-57 and Cys-62 form a disulfide bridge. Residues Asp-86–Glu-122 form the EGF-like 1; calcium-binding domain. 10 cysteine pairs are disulfide-bonded: Cys-90-Cys-101, Cys-95-Cys-110, Cys-112-Cys-121, Cys-131-Cys-142, Cys-138-Cys-152, Cys-154-Cys-167, Cys-175-Cys-302, Cys-199-Cys-204, Cys-218-Cys-234, and Cys-350-Cys-369. Ser-92 carries an O-linked (Glc...) serine glycan. A glycan (O-linked (Glc...) serine; alternate) is linked at Ser-92. Ser-92 carries O-linked (Xyl...) serine; alternate glycosylation. A glycan (O-linked (Fuc) serine) is linked at Ser-100. The 42-residue stretch at Ser-127–Ala-168 folds into the EGF-like 2 domain. N-linked (GlcNAc...) asparagine glycosylation occurs at Asn-185. The Peptidase S1 domain maps to Ile-193–Gly-432. The active-site Charge relay system is His-233. Asn-243 is a glycosylation site (N-linked (GlcNAc...) asparagine). Asp-282 (charge relay system) is an active-site residue. Residue Asp-378 coordinates substrate. The cysteines at positions 380 and 408 are disulfide-linked. The active-site Charge relay system is the Ser-384.

Belongs to the peptidase S1 family. In terms of assembly, heterodimer of a light chain and a heavy chain linked by a disulfide bond. The vitamin K-dependent, enzymatic carboxylation of some glutamate residues allows the modified protein to bind calcium. In terms of processing, O-glycosylated. O-fucosylated by POFUT1 on a conserved serine or threonine residue found in the consensus sequence C2-X(4,5)-[S/T]-C3 of EGF domains, where C2 and C3 are the second and third conserved cysteines. Post-translationally, can be either O-glucosylated or O-xylosylated at Ser-92 by POGLUT1. Plasma.

It localises to the secreted. The enzyme catalyses Selective cleavage of Arg-|-Ile bond in factor X to form factor Xa.. Its function is as follows. Initiates the extrinsic pathway of blood coagulation. Serine protease that circulates in the blood in a zymogen form. Factor VII is converted to factor VIIa by factor Xa, factor XIIa, factor IXa, or thrombin by minor proteolysis. In the presence of tissue factor and calcium ions, factor VIIa then converts factor X to factor Xa by limited proteolysis. Factor VIIa also converts factor IX to factor IXa in the presence of tissue factor and calcium. This Bos taurus (Bovine) protein is Coagulation factor VII (F7).